A 706-amino-acid chain; its full sequence is MTIIIAGKNTLTLTSLAAAVLALGACGGNSDPFESKNTKPAYLGAVAIASYDGASDDLLTAGLGKTGLGGTAPAVADPLKPTPAELRRLAIFNNYRAILDISTNGGYGTLYGPNVDAKGVITTGEGKIAGTEYIAYSDDGTGRQNITMMVQVPASFNPANACIVTGTSSGSRGVYGAIGSAGEWGLKNGCAVAYTDKGTGTGIHDLQNNTVNVQNGVRTDAAAAGKNSIFTAELSASERAAFNAATPNRFAVKHAHSQQNPEKDWGKWTLQSVEFAYFVLNEKYGDLARDGATHLKKLTPSNTIVIASSVSNGAGAALAAAEQDTQGLISGVAVAEPEVQLAPDARLSVKRGASVLVGTGKPLYDYFTLANLLQPCAALVSPATNAFNTVNAATATNRCSALKANGLVTGTTTAEQAASALAALVAAGWQPESNVLQASHYSFATLSVGLTYANTYGRFSVKDNLCGFSFAATGAAASATPNAPVPASASALATSFGASNGVPPTIGINIVNNLSAGGPLLDAASLSAGGVQDYNIAGALCMRELATGSSANAVRVRQGMSEVVRSANLRGKPALIVQGRADTLLPVAFTGRPYYGMNKIVEGTASRLSYIEVTNAQHFDAFLAFPGYPERMVPLHRYFIQAMDMMYANLKTGAALPASQVVRTVPRGLTGAVANPIAASNVPPIKTTPAAADQITFANNVVTIAD.

The first 27 residues, 1 to 27, serve as a signal peptide directing secretion; sequence MTIIIAGKNTLTLTSLAAAVLALGACG. Residue S311 is the Charge relay system of the active site.

This sequence belongs to the D-(-)-3-hydroxybutyrate oligomer hydrolase family.

The protein localises to the secreted. It catalyses the reaction (3R)-hydroxybutanoate dimer + H2O = 2 (R)-3-hydroxybutanoate + H(+). It functions in the pathway lipid metabolism; butanoate metabolism. In terms of biological role, participates in the degradation of poly-3-hydroxybutyrate (PHB). It works downstream of poly(3-hydroxybutyrate) depolymerase, hydrolyzing D(-)-3-hydroxybutyrate oligomers of various length (3HB-oligomers) into 3HB-monomers. This Polaromonas naphthalenivorans (strain CJ2) protein is D-(-)-3-hydroxybutyrate oligomer hydrolase.